Here is a 178-residue protein sequence, read N- to C-terminus: ATP-dependent protease subunit HslV (178 aa).

T7 is a catalytic residue. The Na(+) site is built by G162, C165, and T168.

The protein belongs to the peptidase T1B family. HslV subfamily. A double ring-shaped homohexamer of HslV is capped on each side by a ring-shaped HslU homohexamer. The assembly of the HslU/HslV complex is dependent on binding of ATP.

It localises to the cytoplasm. It catalyses the reaction ATP-dependent cleavage of peptide bonds with broad specificity.. Allosterically activated by HslU binding. In terms of biological role, protease subunit of a proteasome-like degradation complex believed to be a general protein degrading machinery. The chain is ATP-dependent protease subunit HslV from Burkholderia lata (strain ATCC 17760 / DSM 23089 / LMG 22485 / NCIMB 9086 / R18194 / 383).